The primary structure comprises 95 residues: Large ribosomal subunit protein bL25 (95 aa).

Residues 1 to 20 (MSFKFNAEVRSKQGKGASRR) are disordered.

It belongs to the bacterial ribosomal protein bL25 family. As to quaternary structure, part of the 50S ribosomal subunit; part of the 5S rRNA/L5/L18/L25 subcomplex. Contacts the 5S rRNA. Binds to the 5S rRNA independently of L5 and L18.

In terms of biological role, this is one of the proteins that binds to the 5S RNA in the ribosome where it forms part of the central protuberance. This Histophilus somni (strain 129Pt) (Haemophilus somnus) protein is Large ribosomal subunit protein bL25.